The sequence spans 164 residues: Ferredoxin-type protein NapF (164 aa).

4Fe-4S ferredoxin-type domains lie at 28-57, 58-89, and 132-161; these read GDES…RGAG, GYPS…PRHT, and YQPQ…AEYL. [4Fe-4S] cluster is bound by residues cysteine 37, cysteine 40, cysteine 43, cysteine 47, cysteine 69, cysteine 72, cysteine 75, cysteine 79, cysteine 141, cysteine 144, cysteine 147, and cysteine 151.

The protein belongs to the NapF family. In terms of assembly, interacts with the cytoplasmic NapA precursor. Requires [4Fe-4S] cluster as cofactor.

The protein resides in the cytoplasm. Its function is as follows. Could be involved in the maturation of NapA, the catalytic subunit of the periplasmic nitrate reductase, before its export into the periplasm. This is Ferredoxin-type protein NapF from Escherichia coli O157:H7.